Reading from the N-terminus, the 366-residue chain is S-adenosylmethionine:tRNA ribosyltransferase-isomerase (366 aa).

It belongs to the QueA family. As to quaternary structure, monomer.

It is found in the cytoplasm. It carries out the reaction 7-aminomethyl-7-carbaguanosine(34) in tRNA + S-adenosyl-L-methionine = epoxyqueuosine(34) in tRNA + adenine + L-methionine + 2 H(+). It functions in the pathway tRNA modification; tRNA-queuosine biosynthesis. Its function is as follows. Transfers and isomerizes the ribose moiety from AdoMet to the 7-aminomethyl group of 7-deazaguanine (preQ1-tRNA) to give epoxyqueuosine (oQ-tRNA). This Parasynechococcus marenigrum (strain WH8102) protein is S-adenosylmethionine:tRNA ribosyltransferase-isomerase.